Reading from the N-terminus, the 372-residue chain is NAD(P)H-quinone oxidoreductase subunit 1 (372 aa).

The next 8 membrane-spanning stretches (helical) occupy residues 27–47 (IIWL…GVLV), 97–117 (ILFT…WLIV), 128–148 (VGIG…GLLM), 176–196 (LALS…IDIV), 204–224 (ILSW…ICAL), 266–286 (ILSA…PIPV), 308–328 (SIGI…AILL), and 347–367 (FLLP…LAFP).

This sequence belongs to the complex I subunit 1 family. In terms of assembly, NDH-1 is composed of at least 11 different subunits.

The protein resides in the cellular thylakoid membrane. It carries out the reaction a plastoquinone + NADH + (n+1) H(+)(in) = a plastoquinol + NAD(+) + n H(+)(out). The enzyme catalyses a plastoquinone + NADPH + (n+1) H(+)(in) = a plastoquinol + NADP(+) + n H(+)(out). In terms of biological role, NDH-1 shuttles electrons from an unknown electron donor, via FMN and iron-sulfur (Fe-S) centers, to quinones in the respiratory and/or the photosynthetic chain. The immediate electron acceptor for the enzyme in this species is believed to be plastoquinone. Couples the redox reaction to proton translocation, and thus conserves the redox energy in a proton gradient. This chain is NAD(P)H-quinone oxidoreductase subunit 1, found in Prochlorococcus marinus subsp. pastoris (strain CCMP1986 / NIES-2087 / MED4).